Here is a 322-residue protein sequence, read N- to C-terminus: Protein mono-ADP-ribosyltransferase PARP16 (322 aa).

Residues 1-287 are Cytoplasmic-facing; it reads MQPSGWAAAR…RASSQLSWFS (287 aa). Positions 5–91 constitute a PARP alpha-helical domain; sequence GWAAAREAAG…AWDLVSWILS (87 aa). D37 carries the post-translational modification ADP-ribosyl aspartic acid. Residue E70 is modified to ADP-ribosyl glutamic acid. One can recognise a PARP catalytic domain in the interval 94–279; it reads VLTIHSAGKA…VYSQKPPKRA (186 aa). 2 positions are modified to N6-(ADP-ribosyl)lysine: K110 and K137. NAD(+)-binding residues include H152, Y182, and Y254. Residues 288 to 308 form a helical membrane-spanning segment; sequence SHWFTVMISLYLLLLLIVSVI. The Lumenal portion of the chain corresponds to 309–322; that stretch reads NSSAFQHFWNRAKR.

The protein belongs to the ARTD/PARP family. Interacts with KPNB1. In terms of processing, auto-mono-ADP-ribosylated.

The protein resides in the endoplasmic reticulum membrane. The catalysed reaction is L-aspartyl-[protein] + NAD(+) = 4-O-(ADP-D-ribosyl)-L-aspartyl-[protein] + nicotinamide. It catalyses the reaction L-glutamyl-[protein] + NAD(+) = 5-O-(ADP-D-ribosyl)-L-glutamyl-[protein] + nicotinamide. It carries out the reaction L-lysyl-[protein] + NAD(+) = N(6)-(ADP-D-ribosyl)-L-lysyl-[protein] + nicotinamide + H(+). With respect to regulation, in absence of activation signal, PARP16 is autoinhibited by the PARP alpha-helical domain (also named HD region), which prevents effective NAD(+)-binding. Activity is highly stimulated by signals, which unfold the PARP alpha-helical domain, relieving autoinhibition. Its function is as follows. Intracellular mono-ADP-ribosyltransferase that plays a role in different processes, such as protein translation and unfolded protein response (UPR), through the mono-ADP-ribosylation of proteins involved in those processes. Acts as an inhibitor of protein translation by catalyzing mono-ADP-ribosylation of ribosomal subunits, such as RPL14 and RPS6, thereby inhibiting polysome assembly and mRNA loading. Mono-ADP-ribosylation of ribosomal subunits is promoted by NMNAT2. Involved in the unfolded protein response (UPR) by ADP-ribosylating and activating EIF2AK3 and ERN1, two important UPR effectors. May also mediate mono-ADP-ribosylation of karyopherin KPNB1 a nuclear import factor. May not modify proteins on arginine or cysteine residues compared to other mono-ADP-ribosyltransferases. The polypeptide is Protein mono-ADP-ribosyltransferase PARP16 (Homo sapiens (Human)).